Here is a 424-residue protein sequence, read N- to C-terminus: Double homeobox protein 4 (424 aa).

Over residues 1-10 the composition is skewed to polar residues; that stretch reads MALPTPSDST. Disordered regions lie at residues 1 to 24, 72 to 102, 218 to 362, and 388 to 414; these read MALPTPSDSTLPAEARGRGRRRRL, SRQLRQHRRESRPWPGRRGPPEGRRKRTAVT, LQPS…LQEP, and QPLLETEAPGELEASEEAASLEAPLSE. 2 consecutive DNA-binding regions (homeobox) follow at residues 19–78 and 94–153; these read GRRR…LRQH and GRRK…PGQG. Basic and acidic residues predominate over residues 265–274; it reads KSREDRDPQR. 2 stretches are compositionally biased toward low complexity: residues 278–302 and 319–329; these read PGPCAVAQPGPAQAGPQGQGVLAPP and AGAAWEPQAGA. Residues 327 to 424 are required for interaction with EP300 and CREBBP, and for transcriptional activation of target genes; the sequence is AGAAPPPQPA…EEYRALLEEL (98 aa). Positions 405 to 424 are important for transcriptional activation of target genes; it reads AASLEAPLSEEEYRALLEEL.

The protein belongs to the paired homeobox family. As to quaternary structure, binds DNA as a monomer. Interacts (via C-terminus) with EP300 and CREBBP. As to expression, isoform 1: Does not seem to be expressed in normal muscle, but is detected in muscle of individuals with FSHD, and also in testis (at protein level). Isoform 1: Does not seem to be expressed in normal muscle, but in muscle of individuals with FSHD, where it may be toxic to cells. Isoform 2: Detected in skeletal muscle, fibroblasts and testis from healthy individuals.

It localises to the nucleus. The protein resides in the cytoplasm. In terms of biological role, transcription factor that is selectively and transiently expressed in cleavage-stage embryos. Binds to double-stranded DNA elements with the consensus sequence 5'-TAATCTAATCA-3'. Binds to chromatin containing histone H3 acetylated at 'Lys-27' (H3K27ac) and promotes deacetylation of H3K27ac. In parallel, binds to chromatin that lacks histone H3 acetylation at 'Lys-27' (H3K27ac) and recruits EP300 and CREBBP to promote acetylation of histone H3 at 'Lys-27' at new sites. Involved in transcriptional regulation of numerous genes, primarily as transcriptional activator, but also mediates repression of a set of target genes. Promotes expression of ZSCAN4 and KDM4E, two proteins with essential roles during early embryogenesis. Promotes nuclear translocation of CTNNB1/beta-catenin and its subsequent activation of target genes. Heterologous expression in cultured embryonic stem cells mediates transcription of HERVL retrotransposons and transcripts derived from ACRO1 and HSATII satellite repeats. May activate expression of PITX1. May regulate microRNA (miRNA) expression. Inappropriate expression can inhibit myogenesis and promote apoptosis. Probably inactive as a transcriptional activator, due to the absence of the C-terminal region that is important for transcriptional activation. Can inhibit transcriptional activation mediated by isoform 1. Heterologous expression of isoform 2 has no deleterious effect on cell survival. The chain is Double homeobox protein 4 from Homo sapiens (Human).